A 403-amino-acid chain; its full sequence is Argininosuccinate synthase (403 aa).

8-16 (AYSGGLDTS) serves as a coordination point for ATP. Position 87 (Tyr87) interacts with L-citrulline. Gly117 serves as a coordination point for ATP. 3 residues coordinate L-aspartate: Thr119, Asn123, and Asp124. Asn123 is an L-citrulline binding site. Residues Arg127, Ser175, Glu259, and Tyr271 each contribute to the L-citrulline site.

Belongs to the argininosuccinate synthase family. Type 1 subfamily. In terms of assembly, homotetramer.

Its subcellular location is the cytoplasm. The catalysed reaction is L-citrulline + L-aspartate + ATP = 2-(N(omega)-L-arginino)succinate + AMP + diphosphate + H(+). It participates in amino-acid biosynthesis; L-arginine biosynthesis; L-arginine from L-ornithine and carbamoyl phosphate: step 2/3. The polypeptide is Argininosuccinate synthase (Salinispora arenicola (strain CNS-205)).